Consider the following 122-residue polypeptide: Small ribosomal subunit protein uS13 (122 aa).

The segment at 95–122 (GLPVRGQKTKTNARTRKGPKRTVANKKK) is disordered.

Belongs to the universal ribosomal protein uS13 family. As to quaternary structure, part of the 30S ribosomal subunit. Forms a loose heterodimer with protein S19. Forms two bridges to the 50S subunit in the 70S ribosome.

Its function is as follows. Located at the top of the head of the 30S subunit, it contacts several helices of the 16S rRNA. In the 70S ribosome it contacts the 23S rRNA (bridge B1a) and protein L5 of the 50S subunit (bridge B1b), connecting the 2 subunits; these bridges are implicated in subunit movement. Contacts the tRNAs in the A and P-sites. The chain is Small ribosomal subunit protein uS13 from Lachnoclostridium phytofermentans (strain ATCC 700394 / DSM 18823 / ISDg) (Clostridium phytofermentans).